Reading from the N-terminus, the 365-residue chain is Eukaryotic translation initiation factor 3 subunit H (365 aa).

In terms of domain architecture, MPN spans 15–166 (ILLDSLVVMK…LRAWRLSTAA (152 aa)).

Belongs to the eIF-3 subunit H family. As to quaternary structure, component of the eukaryotic translation initiation factor 3 (eIF-3) complex.

The protein resides in the cytoplasm. Functionally, component of the eukaryotic translation initiation factor 3 (eIF-3) complex, which is involved in protein synthesis of a specialized repertoire of mRNAs and, together with other initiation factors, stimulates binding of mRNA and methionyl-tRNAi to the 40S ribosome. The eIF-3 complex specifically targets and initiates translation of a subset of mRNAs involved in cell proliferation. This chain is Eukaryotic translation initiation factor 3 subunit H, found in Caenorhabditis elegans.